The chain runs to 448 residues: D-inositol 3-phosphate glycosyltransferase (448 aa).

1D-myo-inositol 3-phosphate contacts are provided by residues H35, 46-51, K104, Y137, T161, and R181; that span reads DAGGLN. UDP-N-acetyl-alpha-D-glucosamine is bound at residue G49. The UDP-N-acetyl-alpha-D-glucosamine site is built by R255, K260, and M321. Mg(2+) is bound by residues Y330, R331, and A333. E343 and E351 together coordinate UDP-N-acetyl-alpha-D-glucosamine. T357 provides a ligand contact to Mg(2+).

The protein belongs to the glycosyltransferase group 1 family. MshA subfamily. As to quaternary structure, homodimer.

The enzyme catalyses 1D-myo-inositol 3-phosphate + UDP-N-acetyl-alpha-D-glucosamine = 1D-myo-inositol 2-acetamido-2-deoxy-alpha-D-glucopyranoside 3-phosphate + UDP + H(+). Catalyzes the transfer of a N-acetyl-glucosamine moiety to 1D-myo-inositol 3-phosphate to produce 1D-myo-inositol 2-acetamido-2-deoxy-glucopyranoside 3-phosphate in the mycothiol biosynthesis pathway. This is D-inositol 3-phosphate glycosyltransferase from Acidothermus cellulolyticus (strain ATCC 43068 / DSM 8971 / 11B).